The chain runs to 344 residues: Putative transport protein sll0060 (344 aa).

8 helical membrane passes run 14-34 (LWIGLTLPLCLLNGWVLLQIL), 41-61 (LRIFIIANLVAFILGYPVRWL), 72-92 (AVALVLLTTAIILAVIGLLVI), 155-175 (LINLLIWTAGSLVEAGFIFIM), 215-235 (IGQATVAALLGVSLIISLSIF), 237-257 (VPLALLFGMFVGFMAFFPFGG), 262-282 (VLISIIASFQSIWLGIKVLAI), and 310-330 (ILLSLMIGAKVAGLLGILVAI).

The protein belongs to the autoinducer-2 exporter (AI-2E) (TC 2.A.86) family.

Its subcellular location is the cell membrane. The chain is Putative transport protein sll0060 from Synechocystis sp. (strain ATCC 27184 / PCC 6803 / Kazusa).